The primary structure comprises 405 residues: DNA primase DnaG (405 aa).

Residues 172-248 form the Toprim domain; it reads DSIIVVEGRA…HIDYIARAPP (77 aa). Residues E178, D222, and D224 each coordinate Mg(2+). The segment at 279-302 is disordered; that stretch reads AAGEKTESQMSPQQPQLTQTQPTT. The segment covering 290–302 has biased composition (low complexity); that stretch reads PQQPQLTQTQPTT.

This sequence belongs to the archaeal DnaG primase family. As to quaternary structure, forms a ternary complex with MCM helicase and DNA. Component of the archaeal exosome complex. Requires Mg(2+) as cofactor.

It carries out the reaction ssDNA + n NTP = ssDNA/pppN(pN)n-1 hybrid + (n-1) diphosphate.. RNA polymerase that catalyzes the synthesis of short RNA molecules used as primers for DNA polymerase during DNA replication. Also part of the exosome, which is a complex involved in RNA degradation. Acts as a poly(A)-binding protein that enhances the interaction between heteromeric, adenine-rich transcripts and the exosome. This Pyrobaculum islandicum (strain DSM 4184 / JCM 9189 / GEO3) protein is DNA primase DnaG.